Here is a 554-residue protein sequence, read N- to C-terminus: Formate--tetrahydrofolate ligase (554 aa).

ATP is bound at residue 65-72 (TPLGEGKT).

Belongs to the formate--tetrahydrofolate ligase family.

The catalysed reaction is (6S)-5,6,7,8-tetrahydrofolate + formate + ATP = (6R)-10-formyltetrahydrofolate + ADP + phosphate. Its pathway is one-carbon metabolism; tetrahydrofolate interconversion. The sequence is that of Formate--tetrahydrofolate ligase from Aliivibrio salmonicida (strain LFI1238) (Vibrio salmonicida (strain LFI1238)).